The sequence spans 141 residues: VLSPADKANIKATWDKIGGHAGEYGGEALERTFASFPTTKTYFPHFDLSHGSAQVKGHGKKVADALTNAVAHLDDLPGALSALSDLHAYKLRVDPVNFKLLSHCLLVTLACHHPAEFTPAVHASLDKFLSSVSTVLTSKYR.

Residues 1–141 (VLSPADKANI…VSTVLTSKYR (141 aa)) form the Globin domain. A Phosphoserine modification is found at serine 3. N6-succinyllysine is present on residues lysine 7 and lysine 11. N6-acetyllysine; alternate is present on lysine 16. An N6-succinyllysine; alternate modification is found at lysine 16. Phosphotyrosine is present on tyrosine 24. Serine 35 bears the Phosphoserine mark. At lysine 40 the chain carries N6-succinyllysine. Serine 49 is subject to Phosphoserine. Histidine 58 contributes to the O2 binding site. Position 87 (histidine 87) interacts with heme b. Phosphoserine is present on serine 102. At threonine 108 the chain carries Phosphothreonine. Serine 124 and serine 131 each carry phosphoserine. 2 positions are modified to phosphothreonine: threonine 134 and threonine 137. At serine 138 the chain carries Phosphoserine.

Belongs to the globin family. Heterotetramer of two alpha chains and two beta chains. In terms of tissue distribution, red blood cells.

Its function is as follows. Involved in oxygen transport from the lung to the various peripheral tissues. Functionally, hemopressin acts as an antagonist peptide of the cannabinoid receptor CNR1. Hemopressin-binding efficiently blocks cannabinoid receptor CNR1 and subsequent signaling. This is Hemoglobin subunit alpha (HBA) from Meles meles (Eurasian badger).